We begin with the raw amino-acid sequence, 148 residues long: uncharacterized protein (148 aa).

The protein localises to the plastid. The protein resides in the chloroplast. This is an uncharacterized protein from Porphyra purpurea (Red seaweed).